The following is a 447-amino-acid chain: Alpha-1,3-mannosyl-glycoprotein 2-beta-N-acetylglucosaminyltransferase (447 aa).

At 1-6 the chain is on the cytoplasmic side; that stretch reads MLKKQS. A helical; Signal-anchor for type II membrane protein transmembrane segment spans residues 7–29; the sequence is AGLVLWGAILFVAWNALLLLFFW. Residues 30 to 447 lie on the Lumenal side of the membrane; that stretch reads TRPVPSRLPS…TWDGYDPSWT (418 aa). C115 and C145 are disulfide-bonded. Residues R117, D144, H190, and D212 each contribute to the substrate site. Position 213 (D213) interacts with Mn(2+). C239 and C305 are joined by a disulfide. The active-site Proton acceptor is the D291. Position 322 (S322) interacts with substrate.

Belongs to the glycosyltransferase 13 family. In terms of assembly, interacts with MGAT4D. Interacts with BRI3. Mn(2+) is required as a cofactor.

It is found in the golgi apparatus membrane. It localises to the cytoplasm. The protein localises to the perinuclear region. It catalyses the reaction N(4)-(alpha-D-Man-(1-&gt;3)-[alpha-D-Man-(1-&gt;3)-[alpha-D-Man-(1-&gt;6)]-alpha-D-Man-(1-&gt;6)]-beta-D-Man-(1-&gt;4)-beta-D-GlcNAc-(1-&gt;4)-beta-D-GlcNAc)-L-asparaginyl-[protein] (N-glucan mannose isomer 5A1,2) + UDP-N-acetyl-alpha-D-glucosamine = N(4)-{beta-D-GlcNAc-(1-&gt;2)-alpha-D-Man-(1-&gt;3)-[alpha-D-Man-(1-&gt;3)-[alpha-D-Man-(1-&gt;6)]-alpha-D-Man-(1-&gt;6)]-beta-D-Man-(1-&gt;4)-beta-D-GlcNAc-(1-&gt;4)-beta-D-GlcNAc}-L-asparaginyl-[protein] + UDP + H(+). It participates in protein modification; protein glycosylation. Its function is as follows. Initiates complex N-linked carbohydrate formation. Essential for the conversion of high-mannose to hybrid and complex N-glycans. This Oryctolagus cuniculus (Rabbit) protein is Alpha-1,3-mannosyl-glycoprotein 2-beta-N-acetylglucosaminyltransferase (MGAT1).